A 319-amino-acid chain; its full sequence is L-galactose dehydrogenase (319 aa).

The active-site Proton donor is the tyrosine 59. An SIS domain is found at 122 to 269 (HCHDIEFGSL…ANKEISSVLV (148 aa)). Residue histidine 124 participates in substrate binding.

Belongs to the aldo/keto reductase family.

The catalysed reaction is L-galactose + NAD(+) = L-galactono-1,4-lactone + NADH + H(+). Its function is as follows. Catalyzes the oxidation of L-galactose to L-galactono-1,4-lactone in the presence of NAD(+). Uses NAD(+) as a hydrogen acceptor much more efficiently than NADP(+). This is L-galactose dehydrogenase (LGALDH) from Arabidopsis thaliana (Mouse-ear cress).